A 255-amino-acid chain; its full sequence is 5-oxoprolinase subunit A (255 aa).

The protein belongs to the LamB/PxpA family. Forms a complex composed of PxpA, PxpB and PxpC.

The enzyme catalyses 5-oxo-L-proline + ATP + 2 H2O = L-glutamate + ADP + phosphate + H(+). Functionally, catalyzes the cleavage of 5-oxoproline to form L-glutamate coupled to the hydrolysis of ATP to ADP and inorganic phosphate. In Nitrobacter winogradskyi (strain ATCC 25391 / DSM 10237 / CIP 104748 / NCIMB 11846 / Nb-255), this protein is 5-oxoprolinase subunit A.